Consider the following 1066-residue polypeptide: Hemoglobin and hemoglobin-haptoglobin-binding protein C (1066 aa).

The N-terminal stretch at 1 to 24 (MTNFKFTLLARSIAFALNASTAYA) is a signal peptide. Tandem repeats lie at residues 26-29 (QPTN), 30-33 (QPTN), 34-37 (QPTN), 38-41 (QPTN), 42-45 (QPTN), 46-49 (QPTN), and 50-53 (QPTN). Positions 26–53 (QPTNQPTNQPTNQPTNQPTNQPTNQPTN) are 7 X 4 AA tandem repeats of Q-P-T-N. Residues 26 to 54 (QPTNQPTNQPTNQPTNQPTNQPTNQPTNQ) are compositionally biased toward low complexity. The disordered stretch occupies residues 26–57 (QPTNQPTNQPTNQPTNQPTNQPTNQPTNQDSN). A TonB box motif is present at residues 63 to 70 (EQINVSGS). Residues 66-200 (NVSGSTETIN…LGGSVIFETK (135 aa)) form the TBDR plug domain. The TBDR beta-barrel domain maps to 208–1066 (DKDYYVSYKR…NYRMSVQFEF (859 aa)). The TonB C-terminal box signature appears at 1049–1066 (NRLYAPGRNYRMSVQFEF).

Belongs to the TonB-dependent receptor family. Hemoglobin/haptoglobin binding protein subfamily.

The protein resides in the cell outer membrane. Its function is as follows. Acts as a receptor for hemoglobin or the hemoglobin/haptoglobin complex of the human host and is required for heme uptake. The protein is Hemoglobin and hemoglobin-haptoglobin-binding protein C (hgpC) of Haemophilus influenzae.